The primary structure comprises 907 residues: Catenin alpha-1 (907 aa).

Thr-2 carries the post-translational modification N-acetylthreonine. The involved in homodimerization stretch occupies residues 2–228 (TAVHAGNINF…PILYTASQAC (227 aa)). Lys-57 is covalently cross-linked (Glycyl lysine isopeptide (Lys-Gly) (interchain with G-Cter in SUMO2)). The segment at 97–148 (VRKQGDLMKSAAGEFADDPCSSVKRGNMVRAARALLSAVTRLLILADMADVY) is interaction with JUP and CTNNB1. Phosphoserine is present on residues Ser-264, Ser-268, Ser-296, and Ser-298. An interaction with alpha-actinin region spans residues 326 to 395 (TRDDRRERIV…AVMDHVSDSF (70 aa)). Thr-635 bears the Phosphothreonine mark. The residue at position 642 (Ser-642) is a Phosphoserine. Thr-646 bears the Phosphothreonine mark. A phosphoserine mark is found at Ser-653 and Ser-656. At Thr-659 the chain carries Phosphothreonine. Residue Lys-798 forms a Glycyl lysine isopeptide (Lys-Gly) (interchain with G-Cter in SUMO2) linkage. Phosphoserine is present on Ser-852. Basic and acidic residues predominate over residues 865–881 (PEKKPLVKREKQDETQT). Residues 865–895 (PEKKPLVKREKQDETQTKIKRASQKKHVNPV) form a disordered region. Residues 882 to 892 (KIKRASQKKHV) are compositionally biased toward basic residues.

It belongs to the vinculin/alpha-catenin family. Monomer and homodimer; the monomer preferentially binds to CTNNB1 and the homodimer to actin. Component of an cadherin:catenin adhesion complex composed of at least of CDH26, beta-catenin/CTNNB1, alpha-catenin/CTNNA1 and p120 catenin/CTNND1. Possible component of an E-cadherin/ catenin adhesion complex together with E-cadherin/CDH1 and beta-catenin/CTNNB1 or gamma-catenin/JUP; the complex is located to adherens junctions. The stable association of CTNNA1 is controversial as CTNNA1 was shown not to bind to F-actin when assembled in the complex. Alternatively, the CTNNA1-containing complex may be linked to F-actin by other proteins such as LIMA1. Binds AFDN and F-actin. Interacts with ARHGAP21. Interacts with AJUBA. Interacts with LIMA1. Interacts with vinculin/VCL. Interacts with TJP2/ZO2 (via N-terminus). Interacts with TJP1/ZO1 (via N-terminus). Post-translationally, sumoylated. In terms of processing, phosphorylation seems to contribute to the strength of cell-cell adhesion rather than to the basic capacity for cell-cell adhesion.

Its subcellular location is the cytoplasm. The protein localises to the cytoskeleton. It localises to the cell junction. It is found in the adherens junction. The protein resides in the cell membrane. Its subcellular location is the nucleus. Its function is as follows. Associates with the cytoplasmic domain of a variety of cadherins. The association of catenins to cadherins produces a complex which is linked to the actin filament network, and which seems to be of primary importance for cadherins cell-adhesion properties. Can associate with both E- and N-cadherins. Originally believed to be a stable component of E-cadherin/catenin adhesion complexes and to mediate the linkage of cadherins to the actin cytoskeleton at adherens junctions. In contrast, cortical actin was found to be much more dynamic than E-cadherin/catenin complexes and CTNNA1 was shown not to bind to F-actin when assembled in the complex suggesting a different linkage between actin and adherens junctions components. The homodimeric form may regulate actin filament assembly and inhibit actin branching by competing with the Arp2/3 complex for binding to actin filaments. Involved in the regulation of WWTR1/TAZ, YAP1 and TGFB1-dependent SMAD2 and SMAD3 nuclear accumulation. May play a crucial role in cell differentiation. The polypeptide is Catenin alpha-1 (Oryctolagus cuniculus (Rabbit)).